Reading from the N-terminus, the 355-residue chain is Elongation factor Ts (355 aa).

The involved in Mg(2+) ion dislocation from EF-Tu stretch occupies residues 82–85; it reads TDFV.

It belongs to the EF-Ts family.

It is found in the cytoplasm. Its function is as follows. Associates with the EF-Tu.GDP complex and induces the exchange of GDP to GTP. It remains bound to the aminoacyl-tRNA.EF-Tu.GTP complex up to the GTP hydrolysis stage on the ribosome. The protein is Elongation factor Ts (tsf) of Helicobacter pylori (strain J99 / ATCC 700824) (Campylobacter pylori J99).